The primary structure comprises 275 residues: MGLKKFKPVTPGRRFMLIPDYSEITKTEPEKSLLVPLKKKAGRNHHGHVTVRHQGGGHKRMYRIIDFKRNKFGIPARVASIEYDPNRTARIALLVYADGEKRYILAPKGLKVGDTIMNGPDAEITVGNALPLANIPVGTIVHNIEFIPGKGGQIARSAGTYAQLMAKEGRYALLRMPSGELRKVLVTCMATIGMVGNEDHSNEVHGKAGRKRWLGIRPTVRGMTMNPVDHPMGGGEGRSKGHIPQSPWGIPAKGYKTRKSKKPSDKLIVKRRKQK.

The segment at 221-275 (RGMTMNPVDHPMGGGEGRSKGHIPQSPWGIPAKGYKTRKSKKPSDKLIVKRRKQK) is disordered.

It belongs to the universal ribosomal protein uL2 family. As to quaternary structure, part of the 50S ribosomal subunit. Forms a bridge to the 30S subunit in the 70S ribosome.

One of the primary rRNA binding proteins. Required for association of the 30S and 50S subunits to form the 70S ribosome, for tRNA binding and peptide bond formation. It has been suggested to have peptidyltransferase activity; this is somewhat controversial. Makes several contacts with the 16S rRNA in the 70S ribosome. This is Large ribosomal subunit protein uL2 from Kosmotoga olearia (strain ATCC BAA-1733 / DSM 21960 / TBF 19.5.1).